The following is a 183-amino-acid chain: UPF0316 protein GTNG_0803 (183 aa).

A run of 3 helical transmembrane segments spans residues 5-25, 33-53, and 59-79; these read IVLV…RTIF, LAAF…SIVF, and YIVM…LEDI.

This sequence belongs to the UPF0316 family.

It localises to the cell membrane. The chain is UPF0316 protein GTNG_0803 from Geobacillus thermodenitrificans (strain NG80-2).